Consider the following 78-residue polypeptide: Large ribosomal subunit protein bL28 (78 aa).

Belongs to the bacterial ribosomal protein bL28 family.

This is Large ribosomal subunit protein bL28 from Trichormus variabilis (strain ATCC 29413 / PCC 7937) (Anabaena variabilis).